The chain runs to 424 residues: Serine hydroxymethyltransferase 2 (424 aa).

(6S)-5,6,7,8-tetrahydrofolate contacts are provided by residues L125 and 129–131 (GHL). Position 234 is an N6-(pyridoxal phosphate)lysine (K234). Residue E250 participates in (6S)-5,6,7,8-tetrahydrofolate binding.

Belongs to the SHMT family. Homodimer. Requires pyridoxal 5'-phosphate as cofactor.

The protein resides in the cytoplasm. The catalysed reaction is (6R)-5,10-methylene-5,6,7,8-tetrahydrofolate + glycine + H2O = (6S)-5,6,7,8-tetrahydrofolate + L-serine. It functions in the pathway one-carbon metabolism; tetrahydrofolate interconversion. It participates in amino-acid biosynthesis; glycine biosynthesis; glycine from L-serine: step 1/1. Catalyzes the reversible interconversion of serine and glycine with tetrahydrofolate (THF) serving as the one-carbon carrier. This reaction serves as the major source of one-carbon groups required for the biosynthesis of purines, thymidylate, methionine, and other important biomolecules. Also exhibits THF-independent aldolase activity toward beta-hydroxyamino acids, producing glycine and aldehydes, via a retro-aldol mechanism. The polypeptide is Serine hydroxymethyltransferase 2 (Cupriavidus pinatubonensis (strain JMP 134 / LMG 1197) (Cupriavidus necator (strain JMP 134))).